We begin with the raw amino-acid sequence, 902 residues long: Cytosolic 10-formyltetrahydrofolate dehydrogenase (902 aa).

The interval 1 to 310 (MKIAVIGQSL…PASQYFKTAD (310 aa)) is hydrolase domain. Residue 88–90 (QFI) coordinates (6R)-10-formyltetrahydrofolate. The Proton donor role is filled by His106. Asp142 contacts (6R)-10-formyltetrahydrofolate. The Carrier domain occupies 318-395 (EEEQKVSEEI…EFIQMVVRRM (78 aa)). Ser354 bears the O-(pantetheine 4'-phosphoryl)serine mark. An aldehyde dehydrogenase domain region spans residues 417–902 (TVKIPHQLFI…LKTKAVTIEY (486 aa)). NADP(+) is bound by residues 571–573 (IPW), 597–600 (KPAQ), 630–635 (GSLIGQ), 650–651 (GS), and 673–674 (EL). Glu673 serves as the catalytic Proton acceptor. The Proton donor role is filled by Cys707. Residues Lys757 and 804–806 (ESF) contribute to the NADP(+) site.

The protein in the N-terminal section; belongs to the GART family. In the C-terminal section; belongs to the aldehyde dehydrogenase family. ALDH1L subfamily. As to quaternary structure, homotetramer. Post-translationally, phosphopantetheinylation at Ser-354 by AASDHPPT is required for the formyltetrahydrofolate dehydrogenase activity.

It localises to the cytoplasm. The protein localises to the cytosol. It catalyses the reaction (6R)-10-formyltetrahydrofolate + NADP(+) + H2O = (6S)-5,6,7,8-tetrahydrofolate + CO2 + NADPH + H(+). Cytosolic 10-formyltetrahydrofolate dehydrogenase that catalyzes the NADP(+)-dependent conversion of 10-formyltetrahydrofolate to tetrahydrofolate and carbon dioxide. May also have an NADP(+)-dependent aldehyde dehydrogenase activity towards formaldehyde, acetaldehyde, propionaldehyde, and benzaldehyde. This is Cytosolic 10-formyltetrahydrofolate dehydrogenase (aldh1l1) from Xenopus laevis (African clawed frog).